The primary structure comprises 434 residues: Pre-mRNA-splicing factor PRP46 (434 aa).

WD repeat units follow at residues 120–160 (GHTG…LKIT), 163–202 (GHVMSVRDIAISKRHPYMFSASEDKLVKCWDLERNTAIRD), 205–244 (GHLSGVHTVDVHPSLDIIATAGRDAVVRLWDIRSRSEIMV), 247–288 (GHKS…KVLT), 290–329 (HSRNIRDLTLHPAEFSFASVSTNDVRSWKLPEGQLLTNFQ), 331–369 (QNTGILNTVSINHDNVLLAGGDDGTLCFYDYKTGHKYQS), and 380–419 (ESERSILCSTFDVTGTRLITGEGDKSIKIWKQVPDATEDT).

The protein belongs to the WD repeat PRL1/PRL2 family. Associated with the spliceosome.

It is found in the cytoplasm. It localises to the nucleus. In terms of biological role, involved in pre-mRNA splicing and required for cell cycle progression at G2/M. The polypeptide is Pre-mRNA-splicing factor PRP46 (PRP46) (Kluyveromyces lactis (strain ATCC 8585 / CBS 2359 / DSM 70799 / NBRC 1267 / NRRL Y-1140 / WM37) (Yeast)).